A 432-amino-acid polypeptide reads, in one-letter code: 3-phosphoshikimate 1-carboxyvinyltransferase (432 aa).

3 residues coordinate 3-phosphoshikimate: Lys23, Ser24, and Arg28. Lys23 lines the phosphoenolpyruvate pocket. Phosphoenolpyruvate-binding residues include Gly95 and Arg123. Residues Ser167, Gln169, Asp317, and Lys344 each coordinate 3-phosphoshikimate. Gln169 provides a ligand contact to phosphoenolpyruvate. The active-site Proton acceptor is the Asp317. Positions 348 and 390 each coordinate phosphoenolpyruvate.

This sequence belongs to the EPSP synthase family. As to quaternary structure, monomer.

The protein localises to the cytoplasm. It catalyses the reaction 3-phosphoshikimate + phosphoenolpyruvate = 5-O-(1-carboxyvinyl)-3-phosphoshikimate + phosphate. The protein operates within metabolic intermediate biosynthesis; chorismate biosynthesis; chorismate from D-erythrose 4-phosphate and phosphoenolpyruvate: step 6/7. Catalyzes the transfer of the enolpyruvyl moiety of phosphoenolpyruvate (PEP) to the 5-hydroxyl of shikimate-3-phosphate (S3P) to produce enolpyruvyl shikimate-3-phosphate and inorganic phosphate. In Staphylococcus haemolyticus (strain JCSC1435), this protein is 3-phosphoshikimate 1-carboxyvinyltransferase.